We begin with the raw amino-acid sequence, 185 residues long: Ribosome-recycling factor (185 aa).

It belongs to the RRF family.

Its subcellular location is the cytoplasm. Functionally, responsible for the release of ribosomes from messenger RNA at the termination of protein biosynthesis. May increase the efficiency of translation by recycling ribosomes from one round of translation to another. The sequence is that of Ribosome-recycling factor from Halalkalibacterium halodurans (strain ATCC BAA-125 / DSM 18197 / FERM 7344 / JCM 9153 / C-125) (Bacillus halodurans).